Reading from the N-terminus, the 327-residue chain is Serpentine receptor class alpha-33 (327 aa).

6 helical membrane passes run 20–40, 56–76, 133–153, 186–206, 227–247, and 270–290; these read FSVY…VLAI, LLIT…FLQN, FSHA…STVF, IIPY…LIIY, AVVS…LFCF, and IIGW…AVFL.

This sequence belongs to the nematode receptor-like protein sra family.

It is found in the membrane. This chain is Serpentine receptor class alpha-33 (sra-33), found in Caenorhabditis elegans.